The following is a 757-amino-acid chain: Dolichyl-diphosphooligosaccharide--protein glycosyltransferase subunit stt-3 (757 aa).

The Cytoplasmic segment spans residues 1-13; that stretch reads MTSTTAARTASSR. Residues 14–34 form a helical membrane-spanning segment; sequence VGATTLLTIVVLALAWFVGFA. Residues 35–121 are Lumenal-facing; it reads SRLFAIVRFE…VHIREVCVFL (87 aa). A DXD motif 1 motif is present at residues 49–51; that stretch reads EFD. D51 serves as a coordination point for Mn(2+). A helical membrane pass occupies residues 122 to 140; it reads APTFSGLTAIATYLLTKEL. Over 141 to 142 the chain is Cytoplasmic; it reads WS. Residues 143–160 form a helical membrane-spanning segment; sequence PGAGLFAACFIAISPGYT. The Lumenal portion of the chain corresponds to 161–171; sequence SRSVAGSYDNE. Positions 169 and 171 each coordinate Mn(2+). A DXD motif 2 motif is present at residues 169 to 171; the sequence is DNE. The chain crosses the membrane as a helical span at residues 172–191; that stretch reads GIAIFALQFTYYLWVKSLKT. Residues 192 to 193 lie on the Cytoplasmic side of the membrane; the sequence is GS. Residues 194 to 208 form a helical membrane-spanning segment; sequence IMWASLCALSYFYMV. Topologically, residues 209 to 210 are lumenal; that stretch reads SA. Transmembrane regions (helical) follow at residues 211 to 235 and 236 to 261; these read WGGY…GRYS and SRLF…FVGF. The Lumenal portion of the chain corresponds to 262–269; sequence QPVRTSEH. The chain crosses the membrane as a helical span at residues 270 to 289; the sequence is MPAFGVFGLLQIVALMHYAR. Topologically, residues 290–299 are cytoplasmic; sequence NRITRQQFMT. The chain crosses the membrane as a helical span at residues 300 to 320; the sequence is LFVGGLTILGALSVVVYFALV. At 321-358 the chain is on the lumenal side; the sequence is WGGYVAPFSGRFYSLWDTGYAKIHIPIIASVSEHQPTT. The SVSE motif motif lies at 350–353; sequence SVSE. The chain crosses the membrane as a helical span at residues 359-381; sequence WVSFFFDLHITAAVFPVGLWYCI. Topologically, residues 382–387 are cytoplasmic; that stretch reads KKVNDE. A helical transmembrane segment spans residues 388 to 404; it reads RVFIILYAVSAVYFAGV. The Lumenal portion of the chain corresponds to 405–408; it reads MVRL. R407 contacts dolichyl diphosphooligosaccharide. Residues 409–430 traverse the membrane as a helical segment; it reads MLTLTPAVCVLAGIGFSYTFEK. Residues 431–469 are Cytoplasmic-facing; sequence YLKDEETKERSSSQSGTTKDEKLYDKAAKNVKSRNANDG. The helical transmembrane segment at 470–495 threads the bilayer; that stretch reads DESGVSSNVRTIISIILVIFLLMFVV. The Lumenal segment spans residues 496 to 757; it reads HATYVTSNAY…IRPAPTASKA (262 aa). Positions 547–549 are interacts with target acceptor peptide in protein substrate; it reads WWD. A WWDYG motif motif is present at residues 547–551; sequence WWDYG. Y552 contributes to the dolichyl diphosphooligosaccharide binding site. N-linked (GlcNAc...) asparagine glycosylation is found at N559 and N566. N570 is a glycosylation site (N-linked (GlcNAc...) (high mannose) asparagine). Residue N584 is glycosylated (N-linked (GlcNAc...) asparagine). Residues 614 to 621 carry the DK motif motif; it reads DINKFLWM. The segment at 721–757 is disordered; the sequence is RPTVKSEEATIPIKGKKATQGKNKKGVIRPAPTASKA. The segment covering 734 to 747 has biased composition (basic residues); that stretch reads KGKKATQGKNKKGV.

The protein belongs to the STT3 family. In terms of assembly, component of the oligosaccharyltransferase (OST) complex. Requires Mg(2+) as cofactor. Mn(2+) is required as a cofactor.

It localises to the endoplasmic reticulum membrane. The catalysed reaction is a di-trans,poly-cis-dolichyl diphosphooligosaccharide + L-asparaginyl-[protein] = N(4)-(oligosaccharide-(1-&gt;4)-N-acetyl-beta-D-glucosaminyl-(1-&gt;4)-N-acetyl-beta-D-glucosaminyl)-L-asparaginyl-[protein] + a di-trans,poly-cis-dolichyl diphosphate + H(+). It functions in the pathway protein modification; protein glycosylation. In terms of biological role, catalytic subunit of the oligosaccharyl transferase (OST) complex that catalyzes the initial transfer of a defined glycan (Glc(3)Man(9)GlcNAc(2) in eukaryotes) from the lipid carrier dolichol-pyrophosphate to an asparagine residue within an Asn-X-Ser/Thr consensus motif in nascent polypeptide chains, the first step in protein N-glycosylation. N-glycosylation occurs cotranslationally and the complex associates with the Sec61 complex at the channel-forming translocon complex that mediates protein translocation across the endoplasmic reticulum (ER). All subunits are required for a maximal enzyme activity. This subunit contains the active site and the acceptor peptide and donor lipid-linked oligosaccharide (LLO) binding pockets. This chain is Dolichyl-diphosphooligosaccharide--protein glycosyltransferase subunit stt-3, found in Caenorhabditis elegans.